The sequence spans 385 residues: uncharacterized protein (385 aa).

The next 8 helical transmembrane spans lie at 17-37 (ILII…FIFT), 72-92 (TELM…WFLL), 107-127 (WILK…KCIT), 155-175 (ICLI…FYII), 191-211 (WIQA…LVLL), 295-315 (AFPS…FYFL), 326-346 (ITLL…IVVN), and 354-374 (ITFT…FNSF).

It localises to the membrane. This is an uncharacterized protein from Mycoplasma capricolum subsp. capricolum (strain California kid / ATCC 27343 / NCTC 10154).